We begin with the raw amino-acid sequence, 271 residues long: Acetyl-coenzyme A carboxylase carboxyl transferase subunit beta (271 aa).

Residues 21–271 enclose the CoA carboxyltransferase N-terminal domain; that stretch reads LWIQCPYCKQ…LGDLLALHTA (251 aa). Zn(2+)-binding residues include cysteine 25, cysteine 28, cysteine 43, and cysteine 46. A C4-type zinc finger spans residues 25–46; sequence CPYCKQGSYRESLGNAQVCPHC.

Belongs to the AccD/PCCB family. In terms of assembly, acetyl-CoA carboxylase is a heterohexamer composed of biotin carboxyl carrier protein (AccB), biotin carboxylase (AccC) and two subunits each of ACCase subunit alpha (AccA) and ACCase subunit beta (AccD). Requires Zn(2+) as cofactor.

The protein resides in the cytoplasm. It carries out the reaction N(6)-carboxybiotinyl-L-lysyl-[protein] + acetyl-CoA = N(6)-biotinyl-L-lysyl-[protein] + malonyl-CoA. It participates in lipid metabolism; malonyl-CoA biosynthesis; malonyl-CoA from acetyl-CoA: step 1/1. Functionally, component of the acetyl coenzyme A carboxylase (ACC) complex. Biotin carboxylase (BC) catalyzes the carboxylation of biotin on its carrier protein (BCCP) and then the CO(2) group is transferred by the transcarboxylase to acetyl-CoA to form malonyl-CoA. The chain is Acetyl-coenzyme A carboxylase carboxyl transferase subunit beta from Lacticaseibacillus paracasei (strain ATCC 334 / BCRC 17002 / CCUG 31169 / CIP 107868 / KCTC 3260 / NRRL B-441) (Lactobacillus paracasei).